We begin with the raw amino-acid sequence, 556 residues long: Secreted lipase 4 (556 aa).

The signal sequence occupies residues 1–21; that stretch reads MKLLTNIGTLLALSPVQQVSA. Residues Asn-46, Asn-263, Asn-305, Asn-411, and Asn-453 are each glycosylated (N-linked (GlcNAc...) asparagine).

It belongs to the type-B carboxylesterase/lipase family.

It localises to the secreted. It catalyses the reaction a carboxylic ester + H2O = an alcohol + a carboxylate + H(+). In terms of biological role, secreted lipase involved in plant virulence. Has a substrate preference for p-nitrophenyl esters with a carbon chain length of C12 (p-nitrophenyl laureate). The chain is Secreted lipase 4 from Gibberella zeae (strain ATCC MYA-4620 / CBS 123657 / FGSC 9075 / NRRL 31084 / PH-1) (Wheat head blight fungus).